The sequence spans 491 residues: 3-octaprenyl-4-hydroxybenzoate carboxy-lyase (491 aa).

Asn-172 lines the Mn(2+) pocket. Prenylated FMN contacts are provided by residues 175–177 (IYR), 189–191 (RWL), and 194–195 (RG). Mn(2+) is bound at residue Glu-238. Asp-287 serves as the catalytic Proton donor.

It belongs to the UbiD family. Homohexamer. Prenylated FMN is required as a cofactor. Requires Mn(2+) as cofactor.

The protein resides in the cell membrane. It catalyses the reaction a 4-hydroxy-3-(all-trans-polyprenyl)benzoate + H(+) = a 2-(all-trans-polyprenyl)phenol + CO2. Its pathway is cofactor biosynthesis; ubiquinone biosynthesis. Functionally, catalyzes the decarboxylation of 3-octaprenyl-4-hydroxy benzoate to 2-octaprenylphenol, an intermediate step in ubiquinone biosynthesis. This Alcanivorax borkumensis (strain ATCC 700651 / DSM 11573 / NCIMB 13689 / SK2) protein is 3-octaprenyl-4-hydroxybenzoate carboxy-lyase.